The sequence spans 277 residues: Thiazole synthase (277 aa).

Lysine 119 serves as the catalytic Schiff-base intermediate with DXP. Residues glycine 180, 206–207 (AG), and 228–229 (NT) each bind 1-deoxy-D-xylulose 5-phosphate.

Belongs to the ThiG family. Homotetramer. Forms heterodimers with either ThiH or ThiS.

The protein resides in the plastid. It localises to the chloroplast. The enzyme catalyses [ThiS sulfur-carrier protein]-C-terminal-Gly-aminoethanethioate + 2-iminoacetate + 1-deoxy-D-xylulose 5-phosphate = [ThiS sulfur-carrier protein]-C-terminal Gly-Gly + 2-[(2R,5Z)-2-carboxy-4-methylthiazol-5(2H)-ylidene]ethyl phosphate + 2 H2O + H(+). Its pathway is cofactor biosynthesis; thiamine diphosphate biosynthesis. Functionally, catalyzes the rearrangement of 1-deoxy-D-xylulose 5-phosphate (DXP) to produce the thiazole phosphate moiety of thiamine. Sulfur is provided by the thiocarboxylate moiety of the carrier protein ThiS. In vitro, sulfur can be provided by H(2)S. This Pyropia yezoensis (Susabi-nori) protein is Thiazole synthase.